Reading from the N-terminus, the 302-residue chain is Mediator of RNA polymerase II transcription subunit 6 (302 aa).

Residues 260 to 281 (ATGQTGATSRFENGSSRSSTDA) are disordered.

The protein belongs to the Mediator complex subunit 6 family. As to quaternary structure, component of the Mediator complex.

It is found in the nucleus. Component of the Mediator complex, a coactivator involved in the regulated transcription of nearly all RNA polymerase II-dependent genes. Mediator functions as a bridge to convey information from gene-specific regulatory proteins to the basal RNA polymerase II transcription machinery. Mediator is recruited to promoters by direct interactions with regulatory proteins and serves as a scaffold for the assembly of a functional preinitiation complex with RNA polymerase II and the general transcription factors. This is Mediator of RNA polymerase II transcription subunit 6 (MED6) from Candida glabrata (strain ATCC 2001 / BCRC 20586 / JCM 3761 / NBRC 0622 / NRRL Y-65 / CBS 138) (Yeast).